We begin with the raw amino-acid sequence, 97 residues long: Aspartyl/glutamyl-tRNA(Asn/Gln) amidotransferase subunit C (97 aa).

It belongs to the GatC family. Heterotrimer of A, B and C subunits.

It carries out the reaction L-glutamyl-tRNA(Gln) + L-glutamine + ATP + H2O = L-glutaminyl-tRNA(Gln) + L-glutamate + ADP + phosphate + H(+). The catalysed reaction is L-aspartyl-tRNA(Asn) + L-glutamine + ATP + H2O = L-asparaginyl-tRNA(Asn) + L-glutamate + ADP + phosphate + 2 H(+). Its function is as follows. Allows the formation of correctly charged Asn-tRNA(Asn) or Gln-tRNA(Gln) through the transamidation of misacylated Asp-tRNA(Asn) or Glu-tRNA(Gln) in organisms which lack either or both of asparaginyl-tRNA or glutaminyl-tRNA synthetases. The reaction takes place in the presence of glutamine and ATP through an activated phospho-Asp-tRNA(Asn) or phospho-Glu-tRNA(Gln). This Prochlorococcus marinus (strain MIT 9211) protein is Aspartyl/glutamyl-tRNA(Asn/Gln) amidotransferase subunit C.